The sequence spans 310 residues: tRNA dimethylallyltransferase (310 aa).

14 to 21 provides a ligand contact to ATP; sequence GPTASGKS. Substrate is bound at residue 16–21; that stretch reads TASGKS. Interaction with substrate tRNA stretches follow at residues 39 to 42 and 163 to 167; these read DSMQ and QRIVR.

The protein belongs to the IPP transferase family. In terms of assembly, monomer. It depends on Mg(2+) as a cofactor.

It catalyses the reaction adenosine(37) in tRNA + dimethylallyl diphosphate = N(6)-dimethylallyladenosine(37) in tRNA + diphosphate. Catalyzes the transfer of a dimethylallyl group onto the adenine at position 37 in tRNAs that read codons beginning with uridine, leading to the formation of N6-(dimethylallyl)adenosine (i(6)A). This Brucella ovis (strain ATCC 25840 / 63/290 / NCTC 10512) protein is tRNA dimethylallyltransferase.